The following is a 394-amino-acid chain: Acetate kinase (394 aa).

Asparagine 7 serves as a coordination point for Mg(2+). Lysine 14 provides a ligand contact to ATP. Arginine 88 provides a ligand contact to substrate. The active-site Proton donor/acceptor is the aspartate 145. Residues histidine 205–glycine 209, aspartate 279–arginine 281, and glycine 327–asparagine 331 contribute to the ATP site. Glutamate 379 provides a ligand contact to Mg(2+).

It belongs to the acetokinase family. In terms of assembly, homodimer. Requires Mg(2+) as cofactor. It depends on Mn(2+) as a cofactor.

The protein resides in the cytoplasm. The catalysed reaction is acetate + ATP = acetyl phosphate + ADP. The protein operates within metabolic intermediate biosynthesis; acetyl-CoA biosynthesis; acetyl-CoA from acetate: step 1/2. Its function is as follows. Catalyzes the formation of acetyl phosphate from acetate and ATP. Can also catalyze the reverse reaction. This chain is Acetate kinase, found in Campylobacter lari (strain RM2100 / D67 / ATCC BAA-1060).